The following is a 233-amino-acid chain: Purine nucleoside phosphorylase DeoD-type (233 aa).

His4 contacts a purine D-ribonucleoside. Phosphate is bound by residues Gly20, Arg24, Arg43, and 87–90; that span reads RIGT. A purine D-ribonucleoside-binding positions include 179–181 and 203–204; these read EME and SD. Residue Asp204 is the Proton donor of the active site.

The protein belongs to the PNP/UDP phosphorylase family. Homohexamer; trimer of homodimers.

The enzyme catalyses a purine D-ribonucleoside + phosphate = a purine nucleobase + alpha-D-ribose 1-phosphate. The catalysed reaction is a purine 2'-deoxy-D-ribonucleoside + phosphate = a purine nucleobase + 2-deoxy-alpha-D-ribose 1-phosphate. In terms of biological role, catalyzes the reversible phosphorolytic breakdown of the N-glycosidic bond in the beta-(deoxy)ribonucleoside molecules, with the formation of the corresponding free purine bases and pentose-1-phosphate. The sequence is that of Purine nucleoside phosphorylase DeoD-type from Helicobacter pylori (strain HPAG1).